A 99-amino-acid chain; its full sequence is Aspartyl/glutamyl-tRNA(Asn/Gln) amidotransferase subunit C (99 aa).

This sequence belongs to the GatC family. In terms of assembly, heterotrimer of A, B and C subunits.

The enzyme catalyses L-glutamyl-tRNA(Gln) + L-glutamine + ATP + H2O = L-glutaminyl-tRNA(Gln) + L-glutamate + ADP + phosphate + H(+). The catalysed reaction is L-aspartyl-tRNA(Asn) + L-glutamine + ATP + H2O = L-asparaginyl-tRNA(Asn) + L-glutamate + ADP + phosphate + 2 H(+). Allows the formation of correctly charged Asn-tRNA(Asn) or Gln-tRNA(Gln) through the transamidation of misacylated Asp-tRNA(Asn) or Glu-tRNA(Gln) in organisms which lack either or both of asparaginyl-tRNA or glutaminyl-tRNA synthetases. The reaction takes place in the presence of glutamine and ATP through an activated phospho-Asp-tRNA(Asn) or phospho-Glu-tRNA(Gln). In Methylibium petroleiphilum (strain ATCC BAA-1232 / LMG 22953 / PM1), this protein is Aspartyl/glutamyl-tRNA(Asn/Gln) amidotransferase subunit C.